Here is a 275-residue protein sequence, read N- to C-terminus: Hydroxyethylthiazole kinase (275 aa).

Met-57 contributes to the substrate binding site. Residues Arg-132 and Ser-178 each contribute to the ATP site. Gly-205 is a binding site for substrate.

The protein belongs to the Thz kinase family. It depends on Mg(2+) as a cofactor.

The enzyme catalyses 5-(2-hydroxyethyl)-4-methylthiazole + ATP = 4-methyl-5-(2-phosphooxyethyl)-thiazole + ADP + H(+). It participates in cofactor biosynthesis; thiamine diphosphate biosynthesis; 4-methyl-5-(2-phosphoethyl)-thiazole from 5-(2-hydroxyethyl)-4-methylthiazole: step 1/1. Catalyzes the phosphorylation of the hydroxyl group of 4-methyl-5-beta-hydroxyethylthiazole (THZ). This is Hydroxyethylthiazole kinase from Clavibacter sepedonicus (Clavibacter michiganensis subsp. sepedonicus).